The primary structure comprises 134 residues: uncharacterized protein (134 aa).

The next 2 membrane-spanning stretches (helical) occupy residues 16 to 36 (IFSF…NTKL) and 43 to 63 (IAYF…IHGT).

It belongs to the plectrovirus ORF5 family.

The protein localises to the host membrane. This is an uncharacterized protein from Spiroplasma citri (SpV1).